The primary structure comprises 351 residues: Anaerobic nitrite reductase Glb1-2 (351 aa).

2 consecutive Globin domains span residues 13-162 (DFTE…VEMK) and 184-333 (CFTE…AEMK). Residues Ser56, Lys70, His74, Lys104, Thr108, His109, Ser227, Lys241, His245, Lys275, Thr279, and His280 each contribute to the heme b site. The interval 331–351 (EMKKTDHDHQTNVEDKSKPSS) is disordered.

It belongs to the plant globin family. As to quaternary structure, monomer. Heme b is required as a cofactor. In terms of tissue distribution, predominantly expressed in nodules and roots, and, to a lesser extent, in leaves, at low levels in pods, but barely in stems, petioles, buds and flowers. As to expression, mainly expressed in nodules and roots at low levels, and barely in leaves. Expressed at very low levels in nodules, roots and pods.

The protein localises to the cytoplasm. Its subcellular location is the nucleus. The catalysed reaction is Fe(III)-heme b-[protein] + nitric oxide + H2O = Fe(II)-heme b-[protein] + nitrite + 2 H(+). Phytoglobin that regulates the fine tuning of nitric oxide (NO) concentration in the cytosol in response to sudden changes in O(2) availability, and performs both symbiotic and nonsymbiotic functions. Exhibits NO dioxygenase activity in the presence of O(2) but nitrite reductase (NiR) activity in the absence of O(2) (e.g. during flooding or in waterlogged soil). May not function as an oxygen storage or transport protein. Extremely reactive toward the physiological ligands O(2), nitric oxide (NO), and nitrite with a very high affinity for O(2) through an hexacoordinate heme iron because of a very low dissociation constant. In terms of biological role, very high affinity for O(2) through two hexacoordinate heme irons. Extremely reactive toward the physiological ligands O(2), nitric oxide (NO), and nitrite. Functionally, very high affinity for O(2) through a single hexacoordinate heme iron. Extremely reactive toward the physiological ligands O(2), nitric oxide (NO), and nitrite. In Medicago truncatula (Barrel medic), this protein is Anaerobic nitrite reductase Glb1-2.